A 430-amino-acid polypeptide reads, in one-letter code: Pyrokinin-1 receptor (430 aa).

At 1–16 the chain is on the extracellular side; it reads MSAGNMSHDLGPPRDP. A glycan (N-linked (GlcNAc...) asparagine) is linked at asparagine 5. Residues 17–37 form a helical membrane-spanning segment; the sequence is LAIVIPVTVVYSLIFITGVVG. Topologically, residues 38–53 are cytoplasmic; that stretch reads NISTCIVIKKNRSMHT. Residues 54-74 traverse the membrane as a helical segment; that stretch reads ATNYYLFSLAISDFLLLLSGV. The Extracellular portion of the chain corresponds to 75–96; sequence PQEVSYIWSKYPYVFGEYICIG. A disulfide bridge connects residues cysteine 94 and cysteine 171. Residues 97–117 form a helical membrane-spanning segment; the sequence is RGLLAETSANATVLTITAFTV. Over 118-140 the chain is Cytoplasmic; sequence ERYIAICHPFLGQAMSKLSRAIR. Residues 141–161 traverse the membrane as a helical segment; sequence IIVLVWIMAIVTAIPQAAQFG. Topologically, residues 162–185 are extracellular; that stretch reads IEHYSGVEQCGIVRVIVKHSFQLS. Residues 186 to 206 traverse the membrane as a helical segment; the sequence is TFIFFLAPMSIILVLYLLIGV. Topologically, residues 207–281 are cytoplasmic; it reads HLYRSTLVEG…GRLNHYGTRR (75 aa). Residues 282-302 form a helical membrane-spanning segment; sequence VLRMLVAVVVCFFLCWAPFHA. Topologically, residues 303 to 321 are extracellular; the sequence is QRLIAIYAPARGAKLRDQH. The helical transmembrane segment at 322-342 threads the bilayer; the sequence is EFVYTVMTYVSGVLYYLSTCI. Topologically, residues 343–430 are cytoplasmic; that stretch reads NPLLYNIMSH…QYAMIGVQVN (88 aa). A compositionally biased stretch (polar residues) spans 388–397; sequence TNSSQTQRFS. The segment at 388-413 is disordered; it reads TNSSQTQRFSIESAEQPKPSIMQNPT.

This sequence belongs to the G-protein coupled receptor 1 family.

It localises to the cell membrane. Receptor for the neuropeptide CAP-3/pyrokinin-1 (TGPSASSGLWFGPRL-amide). Also activated weakly by other neuropeptides terminating in the sequence PRL-amide including pyrokinin-2, Hug-gamma, and ecdysis-triggering-hormone-1. The activity of this receptor is mediated by G proteins which activate a phosphatidyl-inositol-calcium second messenger system. This is Pyrokinin-1 receptor from Drosophila melanogaster (Fruit fly).